We begin with the raw amino-acid sequence, 41 residues long: uncharacterized protein (41 aa).

This is an uncharacterized protein from Treponema pallidum (strain Nichols).